The primary structure comprises 569 residues: Acyl-CoA transferase FVEG_12629 (569 aa).

This sequence belongs to the CoA-transferase III family.

Its function is as follows. Acyl-CoA transferase; part of the Fusarium detoxification of benzoxazolinone cluster 2 (FDB2) involved in the degradation of benzoxazolinones produced by the host plant. Maize, wheat, and rye produce the 2 benzoxazinone phytoanticipins 2,4-dihy-droxy-7-methoxy-1,4-benzoxazin-3-one (DIMBOA) and 2,4-dihydroxy-1,4-benzoxazin-3-one (DIBOA) that, due to their inherent instability once released, spontaneously degrade to the more stable corresponding benzoxazolinones, 6-methoxy-2-benzoxazolinone (MBOA) and 2-benzoxazolinone (BOA), respectively. The first step in the detoxification of benzoxazolinones involves the hydrolysis of the cyclic ester bond of benzoxazolinones by the FDB1 cluster gamma-lactamase MBL1 to aminophenols. MBL1 is able to convert BOA into 2-aminophenol (2-AP), as well as MBOA into 5-methoxy-2-aminophenol (2-AMP). The FDB2 cluster N-malonyltransferase FDB2/NAT1 then metabolizes aminophenols via N-malonylation to non-toxic malonamic acids. FDB2/NAT1 converts 2-AP into N-(2-hydroxyphenyl) malonamic acid (HPMA) and 2-AMP into N-(2-hydroxy-4-methoxyphenyl) malonamic acid (HMPMA). The duplicated dienlactone hydrolases DLH1 and DLH2 may provide redundant function for hydrolyzing the lactone moiety in the BOA molecule. The roles of the amidases an other enzymes encoded by the 2 FDB clusters have not been identified so far. This chain is Acyl-CoA transferase FVEG_12629, found in Gibberella moniliformis (strain M3125 / FGSC 7600) (Maize ear and stalk rot fungus).